The chain runs to 197 residues: MTTLQERVAAHFAESIRAKQEAEKILVEPTVQAAELMLQCLMNDGKILACGNGGSAADAQHFAAEMTGRFEKERMELAAVALTTDTSALTAIGNDYGFDHVFSKQVRALGRAGDVLVGISTSGNSANVIEAVKAAHERDMHVIALTGRDGGKIAAMLKDTDVLLNVPHPRTARIQENHILLIHAMCDCIDSVLLEGM.

In terms of domain architecture, SIS spans 37 to 197 (MLQCLMNDGK…CIDSVLLEGM (161 aa)). 52-54 (NGG) provides a ligand contact to substrate. Zn(2+)-binding residues include His-61 and Glu-65. Residues Glu-65, 94–95 (ND), 120–122 (STS), Ser-125, and Gln-175 each bind substrate. 2 residues coordinate Zn(2+): Gln-175 and His-183.

The protein belongs to the SIS family. GmhA subfamily. Homotetramer. It depends on Zn(2+) as a cofactor.

The protein localises to the cytoplasm. It catalyses the reaction 2 D-sedoheptulose 7-phosphate = D-glycero-alpha-D-manno-heptose 7-phosphate + D-glycero-beta-D-manno-heptose 7-phosphate. Its pathway is carbohydrate biosynthesis; D-glycero-D-manno-heptose 7-phosphate biosynthesis; D-glycero-alpha-D-manno-heptose 7-phosphate and D-glycero-beta-D-manno-heptose 7-phosphate from sedoheptulose 7-phosphate: step 1/1. Functionally, catalyzes the isomerization of sedoheptulose 7-phosphate in D-glycero-D-manno-heptose 7-phosphate. The chain is Phosphoheptose isomerase from Neisseria gonorrhoeae (strain ATCC 700825 / FA 1090).